Here is a 391-residue protein sequence, read N- to C-terminus: Chalcone synthase (391 aa).

Residue Cys164 is part of the active site.

This sequence belongs to the thiolase-like superfamily. Chalcone/stilbene synthases family.

The enzyme catalyses (E)-4-coumaroyl-CoA + 3 malonyl-CoA + 3 H(+) = 2',4,4',6'-tetrahydroxychalcone + 3 CO2 + 4 CoA. Its pathway is secondary metabolite biosynthesis; flavonoid biosynthesis. Its function is as follows. The primary product of this enzyme is 4,2',4',6'-tetrahydroxychalcone (also termed naringenin-chalcone or chalcone) which can under specific conditions spontaneously isomerize into naringenin. This is Chalcone synthase (CHS) from Dianthus monspessulanus.